A 379-amino-acid chain; its full sequence is Cobalt-precorrin-5B C(1)-methyltransferase (379 aa).

Belongs to the CbiD family.

The enzyme catalyses Co-precorrin-5B + S-adenosyl-L-methionine = Co-precorrin-6A + S-adenosyl-L-homocysteine. Its pathway is cofactor biosynthesis; adenosylcobalamin biosynthesis; cob(II)yrinate a,c-diamide from sirohydrochlorin (anaerobic route): step 6/10. Functionally, catalyzes the methylation of C-1 in cobalt-precorrin-5B to form cobalt-precorrin-6A. The protein is Cobalt-precorrin-5B C(1)-methyltransferase of Salmonella schwarzengrund (strain CVM19633).